Here is a 565-residue protein sequence, read N- to C-terminus: Proline--tRNA ligase (565 aa).

Belongs to the class-II aminoacyl-tRNA synthetase family. ProS type 1 subfamily. Homodimer.

It localises to the cytoplasm. The enzyme catalyses tRNA(Pro) + L-proline + ATP = L-prolyl-tRNA(Pro) + AMP + diphosphate. Its function is as follows. Catalyzes the attachment of proline to tRNA(Pro) in a two-step reaction: proline is first activated by ATP to form Pro-AMP and then transferred to the acceptor end of tRNA(Pro). As ProRS can inadvertently accommodate and process non-cognate amino acids such as alanine and cysteine, to avoid such errors it has two additional distinct editing activities against alanine. One activity is designated as 'pretransfer' editing and involves the tRNA(Pro)-independent hydrolysis of activated Ala-AMP. The other activity is designated 'posttransfer' editing and involves deacylation of mischarged Ala-tRNA(Pro). The misacylated Cys-tRNA(Pro) is not edited by ProRS. The sequence is that of Proline--tRNA ligase from Campylobacter lari (strain RM2100 / D67 / ATCC BAA-1060).